Here is a 271-residue protein sequence, read N- to C-terminus: tRNA pseudouridine synthase A (271 aa).

The Nucleophile role is filled by Asp-52. A substrate-binding site is contributed by Tyr-110.

It belongs to the tRNA pseudouridine synthase TruA family. As to quaternary structure, homodimer.

The catalysed reaction is uridine(38/39/40) in tRNA = pseudouridine(38/39/40) in tRNA. Its function is as follows. Formation of pseudouridine at positions 38, 39 and 40 in the anticodon stem and loop of transfer RNAs. This chain is tRNA pseudouridine synthase A, found in Burkholderia mallei (strain NCTC 10247).